A 503-amino-acid polypeptide reads, in one-letter code: D-xylose-proton symporter-like 2 (503 aa).

Residues 1–15 (MALDPEQQQPISSVS) show a composition bias toward polar residues. The segment at 1–32 (MALDPEQQQPISSVSREFGKSSGEISPEREPL) is disordered. Alanine 2 carries the N-acetylalanine modification. At serine 26 the chain carries Phosphoserine. Helical transmembrane passes span 42–62 (YSVVAAILPFLFPALGGLLYG), 99–119 (GSLYGALFGSIVAFTIADVIG), 124–144 (LILAALLYLVGALVTALAPTY), 146–166 (VLIIGRVIYGVSVGLAMHAAP), 187–207 (FFIVLGMVGGYGIGSLTVNVH), 213–233 (MYATSVPLAVIMGIGMWWLPA), 305–325 (ALIIGGGLVLFQQITGQPSVL), 346–366 (VSILLGLLKLIMTGVAVVVID), 375–395 (LGGVGGMVVSLFLLGSYYLFF), 400–420 (VVAVVALLLYVGCYQLSFGPI), 437–457 (GLSLAVLVNFGANALVTFAFS), and 467–487 (ILFCGFGVICVLSLVFIFFIV).

It belongs to the major facilitator superfamily. Sugar transporter (TC 2.A.1.1) family.

The protein resides in the membrane. The polypeptide is D-xylose-proton symporter-like 2 (Arabidopsis thaliana (Mouse-ear cress)).